We begin with the raw amino-acid sequence, 179 residues long: Large ribosomal subunit protein uL5 (179 aa).

It belongs to the universal ribosomal protein uL5 family. As to quaternary structure, part of the 50S ribosomal subunit; part of the 5S rRNA/L5/L18/L25 subcomplex. Contacts the 5S rRNA and the P site tRNA. Forms a bridge to the 30S subunit in the 70S ribosome.

Functionally, this is one of the proteins that bind and probably mediate the attachment of the 5S RNA into the large ribosomal subunit, where it forms part of the central protuberance. In the 70S ribosome it contacts protein S13 of the 30S subunit (bridge B1b), connecting the 2 subunits; this bridge is implicated in subunit movement. Contacts the P site tRNA; the 5S rRNA and some of its associated proteins might help stabilize positioning of ribosome-bound tRNAs. The protein is Large ribosomal subunit protein uL5 of Burkholderia mallei (strain NCTC 10247).